We begin with the raw amino-acid sequence, 376 residues long: Succinyl-diaminopimelate desuccinylase (376 aa).

Position 66 (histidine 66) interacts with Zn(2+). Aspartate 68 is an active-site residue. Residue aspartate 99 coordinates Zn(2+). Residue glutamate 133 is the Proton acceptor of the active site. Positions 134, 162, and 348 each coordinate Zn(2+).

This sequence belongs to the peptidase M20A family. DapE subfamily. In terms of assembly, homodimer. The cofactor is Zn(2+). Co(2+) is required as a cofactor.

It catalyses the reaction N-succinyl-(2S,6S)-2,6-diaminopimelate + H2O = (2S,6S)-2,6-diaminopimelate + succinate. It functions in the pathway amino-acid biosynthesis; L-lysine biosynthesis via DAP pathway; LL-2,6-diaminopimelate from (S)-tetrahydrodipicolinate (succinylase route): step 3/3. Catalyzes the hydrolysis of N-succinyl-L,L-diaminopimelic acid (SDAP), forming succinate and LL-2,6-diaminopimelate (DAP), an intermediate involved in the bacterial biosynthesis of lysine and meso-diaminopimelic acid, an essential component of bacterial cell walls. This chain is Succinyl-diaminopimelate desuccinylase, found in Nitrosococcus oceani (strain ATCC 19707 / BCRC 17464 / JCM 30415 / NCIMB 11848 / C-107).